We begin with the raw amino-acid sequence, 95 residues long: Bombyxin C-2 (95 aa).

The first 19 residues, 1 to 19 (MKLVILLVVVSAMLVLGGA), serve as a signal peptide directing secretion. Pyrrolidone carboxylic acid is present on glutamine 20. Disulfide bonds link cysteine 27–cysteine 76, cysteine 39–cysteine 89, and cysteine 75–cysteine 80. Positions 47 to 67 (SGSQYAGYGWPWLPPFSSSRG) are cleaved as a propeptide — c peptide like.

The protein belongs to the insulin family. In terms of assembly, heterodimer of a B chain and an A chain linked by two disulfide bonds.

It is found in the secreted. Brain peptide responsible for activation of prothoracic glands to produce ecdysone in insects. This Bombyx mori (Silk moth) protein is Bombyxin C-2 (BBXC2).